Here is a 647-residue protein sequence, read N- to C-terminus: Meiotically up-regulated protein C8C9.04 (647 aa).

Disordered stretches follow at residues 1–241 (MTTN…ELKP) and 387–647 (RAQQ…KLFH). The segment covering 29-46 (KSTNAVEQNNNSSQASVT) has biased composition (polar residues). Residues 49–67 (NKKKAAKRAKKKAAKKKKQ) are compositionally biased toward basic residues. The segment covering 92-103 (TILQEPGFTQTI) has biased composition (polar residues). The segment covering 134-145 (PSASTSTAVPTT) has biased composition (low complexity). The segment covering 146 to 155 (EARNTSITEP) has biased composition (polar residues). Residues 156–177 (ANSPSSSSSSASTKSTATTQSA) are compositionally biased toward low complexity. A phosphoserine mark is found at Ser162 and Ser165. At Thr168 the chain carries Phosphothreonine. Residues 193 to 215 (QLGNSPASITSKPATTSAAQPSS) show a composition bias toward polar residues. 2 positions are modified to phosphoserine: Ser197 and Ser200. A compositionally biased stretch (basic and acidic residues) spans 232–241 (AEKEIPELKP). Polar residues-rich tracts occupy residues 390-406 (QPEQ…TETV), 413-432 (VSST…TESE), and 488-508 (PSST…AQSS). At Ser396 the chain carries Phosphoserine. Residues Ser489 and Ser490 each carry the phosphoserine modification. Position 491 is a phosphothreonine (Thr491). Ser515, Ser519, and Ser523 each carry phosphoserine. The span at 518 to 530 (ASAPSSPGTTSAA) shows a compositional bias: low complexity. Residues 561 to 589 (GSATTIPSPGSATTKPTPGSATTKPTPVS) show a composition bias toward polar residues. The segment covering 596 to 613 (AGTTKPAPAAGATATAEN) has biased composition (low complexity). Positions 633-647 (SWFKRMKKSFGKLFH) are enriched in basic residues.

In terms of biological role, has a role in meiosis and sporulation. The protein is Meiotically up-regulated protein C8C9.04 of Schizosaccharomyces pombe (strain 972 / ATCC 24843) (Fission yeast).